The chain runs to 446 residues: Questin oxidase (446 aa).

It belongs to the questin oxidase family.

The enzyme catalyses questin + NADPH + O2 = demethylsulochrin + NADP(+). The protein operates within secondary metabolite biosynthesis. In terms of biological role, questin oxidase; part of the gene cluster that mediates the biosynthesis of geodin, an intermediate in the biosynthesis of other natural products. The pathway begins with the synthesis of atrochrysone thioester by the polyketide synthase (PKS) gedC. The atrochrysone carboxyl ACP thioesterase gedB then breaks the thioester bond and releases the atrochrysone carboxylic acid from gedC. The atrochrysone carboxylic acid is then converted to atrochrysone which is further transformed into emodinanthrone. The next step is performed by the emodinanthrone oxygenase gedH that catalyzes the oxidation of emodinanthrone to emodin. Emodin O-methyltransferase encoded probably by gedA then catalyzes methylation of the 8-hydroxy group of emodin to form questin. Ring cleavage of questin by questin oxidase gedK leads to desmethylsulochrin via several intermediates including questin epoxide. Another methylation step probably catalyzed by methyltransferase gedG leads to the formation of sulochrin which is further converted to dihydrogeodin by the sulochrin halogenase gedL. Finally, the dihydrogeodin oxidase gedJ catalyzes the stereospecific phenol oxidative coupling reaction converting dihydrogeodin to geodin. In Aspergillus terreus (strain NIH 2624 / FGSC A1156), this protein is Questin oxidase.